Here is a 440-residue protein sequence, read N- to C-terminus: Acyltransferase Pun1 (440 aa).

Catalysis depends on proton acceptor residues H169 and D384.

The protein belongs to the plant acyltransferase family.

The catalysed reaction is vanillylamine + (6E)-8-methylnon-6-enoyl-CoA = capsaicin + CoA + H(+). It carries out the reaction (6E)-8-methylnon-6-enoyl-CoA + 4-hydroxy-3-methoxy-benzenemethanol = capsiate + CoA. Involved in the biosynthesis of capsaicinoids and capsinoids natural products, pungent alkaloids synthesized from phenylpropanoid intermediates in the placental tissue of chili pepper fruit acting as repellant on herbivorous mammals and conferring spiciness to hot peppers. Catalyzes the biosynthesis of capsaicin, a pungent component, and of capsiate, a non-pungent component, from vanillylamine and vanillyl alcohol, respectively. Can transfer an acyl from 8-methylnon-6-enoyl-CoA to vanillylamine forming capsaicin and CoA. The protein is Acyltransferase Pun1 of Capsicum frutescens (Cayenne pepper).